Here is a 340-residue protein sequence, read N- to C-terminus: Glutamyl-tRNA reductase (340 aa).

Residues 49–52, Ser-108, 113–115, and Gln-119 each bind substrate; these read TCNR and ETE. Cys-50 (nucleophile) is an active-site residue. 188–193 is a binding site for NADP(+); it reads GAGEMS.

It belongs to the glutamyl-tRNA reductase family. In terms of assembly, homodimer.

The enzyme catalyses (S)-4-amino-5-oxopentanoate + tRNA(Glu) + NADP(+) = L-glutamyl-tRNA(Glu) + NADPH + H(+). It participates in porphyrin-containing compound metabolism; protoporphyrin-IX biosynthesis; 5-aminolevulinate from L-glutamyl-tRNA(Glu): step 1/2. Its function is as follows. Catalyzes the NADPH-dependent reduction of glutamyl-tRNA(Glu) to glutamate 1-semialdehyde (GSA). The sequence is that of Glutamyl-tRNA reductase from Akkermansia muciniphila (strain ATCC BAA-835 / DSM 22959 / JCM 33894 / BCRC 81048 / CCUG 64013 / CIP 107961 / Muc).